The sequence spans 1167 residues: White collar 1 protein (1167 aa).

2 disordered regions span residues 1–91 and 307–355; these read MNNN…MSGG and STPA…GASQ. The span at 21 to 57 shows a compositional bias: low complexity; sequence QHQQQQQQQQQQQQQQQQQQQQQQQQQQQQHQHQQQQ. Composition is skewed to polar residues over residues 70-91 and 307-325; these read TPPTTNQGNSTIHASDVTMSGG and STPATTFQSPSLSATTQTI. Residues 335–348 are compositionally biased toward low complexity; the sequence is VTNAPTPAPFTSTP. A PAS 1 domain is found at 381-452; it reads KLKLGAVDMS…KREFVENNAV (72 aa). S-4a-FMN cysteine is present on cysteine 428. Residues 469–508 form the PAC 1 domain; that stretch reads LINYRKGGKPFLNLLTMIPIPWDTEEIRYFIGFQIDLVEC. One can recognise a PAS 2 domain in the interval 574–644; sequence KQSWDKMLLE…RELKEAQQHT (71 aa). One can recognise a PAC 2 domain in the interval 650–691; the sequence is FRIRRKNSGYTWFESHGTLFNEQGKGRKCIILVGRKRPVFAL. A PAS 3 domain is found at 693–763; that stretch reads RKDLELNGGI…RTIEKARKGK (71 aa). The span at 849-861 shows a compositional bias: low complexity; sequence MSKSGSSDSTGAM. 4 disordered regions span residues 849-872, 918-952, 966-1047, and 1060-1167; these read MSKSGSSDSTGAMVSARSSAGPGQ, KKKRKRRKGGGNMVRDCANCHTRNTPEWRRGPSGN, QTGR…TGST, and VNAL…GLSV. The GATA-type zinc finger occupies 934–959; that stretch reads CANCHTRNTPEWRRGPSGNRDLCNSC. Residues 968–977 show a composition bias toward polar residues; the sequence is GRVSPRTSSR. A compositionally biased stretch (low complexity) spans 986–995; the sequence is KKSNSPSHSS. The segment covering 1004-1033 has biased composition (polar residues); it reads DSPSTTTATKNSPSLRGSSTTAPGTITTDS. Low complexity-rich tracts occupy residues 1036–1047 and 1104–1128; these read AVASSASGTGST and QHQQQHQQQHQQQHQQQHQQLQQHQ.

Heterodimer of wc-1 and wc-2. Post-translationally, FMN binds covalently to cysteine after exposure to blue light and is reversed in the dark.

Its subcellular location is the nucleus. In terms of biological role, may function as a transcription factor involved in light regulation. Binds and affects blue light regulation of the al-3 gene. Wc-1 and wc-2 proteins interact via homologous PAS domains, bind to promoters of light regulated genes such as frq, and activate transcription. This Neurospora crassa (strain ATCC 24698 / 74-OR23-1A / CBS 708.71 / DSM 1257 / FGSC 987) protein is White collar 1 protein (wc-1).